Here is a 1115-residue protein sequence, read N- to C-terminus: Iron-regulated protein FrpA (1115 aa).

Hemolysin-type calcium-binding repeat units lie at residues 755-772 (FGHN…NDTL), 773-790 (IGGA…SDTY), 901-918 (NGGL…NDLL), 919-936 (NGDA…NDTL), 937-954 (DGGE…NDAL), 955-972 (NGGE…NDTL), and 973-990 (IGGA…SDTY).

It belongs to the RTX prokaryotic toxin (TC 1.C.11) family.

It is found in the cell outer membrane. The protein resides in the secreted. In terms of biological role, may participate in the pathogenesis of meningococcal disease. The polypeptide is Iron-regulated protein FrpA (frpA) (Neisseria meningitidis serogroup C).